The following is a 165-amino-acid chain: Crossover junction endodeoxyribonuclease RuvC (165 aa).

Residues aspartate 7, glutamate 67, and aspartate 140 contribute to the active site. Aspartate 7, glutamate 67, and aspartate 140 together coordinate Mg(2+).

This sequence belongs to the RuvC family. As to quaternary structure, homodimer which binds Holliday junction (HJ) DNA. The HJ becomes 2-fold symmetrical on binding to RuvC with unstacked arms; it has a different conformation from HJ DNA in complex with RuvA. In the full resolvosome a probable DNA-RuvA(4)-RuvB(12)-RuvC(2) complex forms which resolves the HJ. Mg(2+) is required as a cofactor.

Its subcellular location is the cytoplasm. It carries out the reaction Endonucleolytic cleavage at a junction such as a reciprocal single-stranded crossover between two homologous DNA duplexes (Holliday junction).. The RuvA-RuvB-RuvC complex processes Holliday junction (HJ) DNA during genetic recombination and DNA repair. Endonuclease that resolves HJ intermediates. Cleaves cruciform DNA by making single-stranded nicks across the HJ at symmetrical positions within the homologous arms, yielding a 5'-phosphate and a 3'-hydroxyl group; requires a central core of homology in the junction. The consensus cleavage sequence is 5'-(A/T)TT(C/G)-3'. Cleavage occurs on the 3'-side of the TT dinucleotide at the point of strand exchange. HJ branch migration catalyzed by RuvA-RuvB allows RuvC to scan DNA until it finds its consensus sequence, where it cleaves and resolves the cruciform DNA. The protein is Crossover junction endodeoxyribonuclease RuvC of Dehalococcoides mccartyi (strain ATCC BAA-2266 / KCTC 15142 / 195) (Dehalococcoides ethenogenes (strain 195)).